Consider the following 445-residue polypeptide: Sporulation-specific glucan 1,3-beta-glucosidase (445 aa).

A signal peptide spans 1 to 21; sequence MVSFRGLTTLTLLFTKLVNCN. The N-linked (GlcNAc...) asparagine glycan is linked to Asn-201. Residue Glu-233 is the Proton donor of the active site. Catalysis depends on Glu-335, which acts as the Nucleophile.

Belongs to the glycosyl hydrolase 5 (cellulase A) family.

It localises to the secreted. The enzyme catalyses Successive hydrolysis of beta-D-glucose units from the non-reducing ends of (1-&gt;3)-beta-D-glucans, releasing alpha-glucose.. Functionally, probably involved in the processes of spore formation and contributes to ascospore thermoresistance by participating in the morphogenesis of ascospore walls. The enzyme may do this by modifying glucan linkages in the developing ascospore wall, thus strengthening it or lending it plasticity. The polypeptide is Sporulation-specific glucan 1,3-beta-glucosidase (SPR1) (Saccharomyces cerevisiae (strain ATCC 204508 / S288c) (Baker's yeast)).